Here is a 352-residue protein sequence, read N- to C-terminus: Uroporphyrinogen decarboxylase (352 aa).

Substrate-binding positions include 26-30, Asp-76, Tyr-153, Ser-208, and His-323; that span reads RQAGR.

It belongs to the uroporphyrinogen decarboxylase family. In terms of assembly, homodimer.

It is found in the cytoplasm. The enzyme catalyses uroporphyrinogen III + 4 H(+) = coproporphyrinogen III + 4 CO2. It functions in the pathway porphyrin-containing compound metabolism; protoporphyrin-IX biosynthesis; coproporphyrinogen-III from 5-aminolevulinate: step 4/4. Its function is as follows. Catalyzes the decarboxylation of four acetate groups of uroporphyrinogen-III to yield coproporphyrinogen-III. The protein is Uroporphyrinogen decarboxylase of Prochlorococcus marinus (strain NATL2A).